Here is a 238-residue protein sequence, read N- to C-terminus: E3 ubiquitin-protein ligase ZNRF2 (238 aa).

The interval 1–137 (MGAKQSGPAA…AGGGPGGPRL (137 aa)) is disordered. G2 carries the N-myristoyl glycine lipid modification. Residues S20, S24, S75, S82, S107, S110, S141, S147, and S189 each carry the phosphoserine modification. A compositionally biased stretch (low complexity) spans 35–77 (GARAARFAAPVSGAQQPSASAGAAAAAAAAASAPAAPRSRSLG). The RING-type; atypical zinc-finger motif lies at 195-236 (CAICLEELQQGDTIARLPCLCIYHKGCIDEWFEVNRSCPEHP).

Interacts with UBE2N. Interacts with ZNRF1. Interacts (when phosphorylated) with YWHAE. In terms of processing, phosphorylated; leading to binding to YWHAE. Phosphorylated by MTOR at Ser-147 and dephosphorylated by PP6C. Ser-147 phosphorylation stimulates vesicle-to-cytosol translocation. Expressed primarily in the nervous system. Expression is more intense in the granular cell layer of hippocampus, Purkinje cell layer of the cerebellum and the granular cell layer of the olfactory bulb. Detected in sensory neurons but not expressed in sympatic or enteric neurons. Expressed in testis, adipose tissue, columnar epithelial cells of the gut.

Its subcellular location is the endosome membrane. It is found in the lysosome membrane. It localises to the presynaptic cell membrane. The protein resides in the cytoplasm. The catalysed reaction is S-ubiquitinyl-[E2 ubiquitin-conjugating enzyme]-L-cysteine + [acceptor protein]-L-lysine = [E2 ubiquitin-conjugating enzyme]-L-cysteine + N(6)-ubiquitinyl-[acceptor protein]-L-lysine.. Its pathway is protein modification; protein ubiquitination. Functionally, E3 ubiquitin-protein ligase that plays a role in the establishment and maintenance of neuronal transmission and plasticity. Ubiquitinates the Na(+)/K(+) ATPase alpha-1 subunit/ATP1A1 and thereby influences its endocytosis and/or degradation. Also acts as a positive regulator of mTORC1 activation by amino acids, which functions upstream of the V-ATPase and of Rag-GTPases. In turn, phosphorylation by mTOR leads to its inhibition via targeting to the cytosol allowing a self-regulating feedback mechanism. The sequence is that of E3 ubiquitin-protein ligase ZNRF2 (Znrf2) from Mus musculus (Mouse).